The following is a 367-amino-acid chain: Peptide chain release factor 2 (367 aa).

At glutamine 254 the chain carries N5-methylglutamine.

This sequence belongs to the prokaryotic/mitochondrial release factor family. Post-translationally, methylated by PrmC. Methylation increases the termination efficiency of RF2.

The protein resides in the cytoplasm. Functionally, peptide chain release factor 2 directs the termination of translation in response to the peptide chain termination codons UGA and UAA. The protein is Peptide chain release factor 2 of Bordetella avium (strain 197N).